We begin with the raw amino-acid sequence, 243 residues long: 3-deoxy-manno-octulosonate cytidylyltransferase (243 aa).

This sequence belongs to the KdsB family.

The protein localises to the cytoplasm. It carries out the reaction 3-deoxy-alpha-D-manno-oct-2-ulosonate + CTP = CMP-3-deoxy-beta-D-manno-octulosonate + diphosphate. The protein operates within nucleotide-sugar biosynthesis; CMP-3-deoxy-D-manno-octulosonate biosynthesis; CMP-3-deoxy-D-manno-octulosonate from 3-deoxy-D-manno-octulosonate and CTP: step 1/1. It functions in the pathway bacterial outer membrane biogenesis; lipopolysaccharide biosynthesis. Its function is as follows. Activates KDO (a required 8-carbon sugar) for incorporation into bacterial lipopolysaccharide in Gram-negative bacteria. In Helicobacter pylori (strain P12), this protein is 3-deoxy-manno-octulosonate cytidylyltransferase.